We begin with the raw amino-acid sequence, 378 residues long: Ferredoxin--NADP reductase, embryo isozyme, chloroplastic (378 aa).

A chloroplast-targeting transit peptide spans 1–62 (MASALGAQAS…SRHMNKIFSM (62 aa)). The FAD-binding FR-type domain occupies 93–221 (KEPYTATIVS…TGPSGKIMLL (129 aa)). FAD contacts are provided by residues 153-156 (RLYS), 174-176 (CVR), Tyr-180, 195-197 (ICS), and Thr-237. NADP(+) is bound by residues Ser-156 and Arg-176. NADP(+) contacts are provided by residues Thr-237, 269–270 (VA), 299–300 (SR), Lys-309, 337–338 (GL), and Glu-376.

Belongs to the ferredoxin--NADP reductase type 1 family. FAD serves as cofactor.

Its subcellular location is the plastid. The protein localises to the chloroplast. It carries out the reaction 2 reduced [2Fe-2S]-[ferredoxin] + NADP(+) + H(+) = 2 oxidized [2Fe-2S]-[ferredoxin] + NADPH. Its pathway is energy metabolism; photosynthesis. In terms of biological role, may play a key role in regulating the relative amounts of cyclic and non-cyclic electron flow to meet the demands of the plant for ATP and reducing power. Is involved in nitrate assimilation. This is Ferredoxin--NADP reductase, embryo isozyme, chloroplastic from Oryza sativa subsp. japonica (Rice).